We begin with the raw amino-acid sequence, 864 residues long: Mitochondrial 15S rRNA processing factor CCM1 (864 aa).

Residues 1-76 (MYMARCGPKN…REFSNTLKER (76 aa)) constitute a mitochondrion transit peptide. 2 PPR repeats span residues 319–353 (NKQNLTTVIQFYSRKEMTKQAWNTFDTMKFLSTKH) and 356–390 (DICTYNTMLRICEKERNFPKALDLFQEIQDHNIKP).

The protein belongs to the CCM1 family. Binds to mitochondrial small subunit 15S rRNA.

Its subcellular location is the mitochondrion. Its function is as follows. Regulates mitochondrial small subunit maturation by controlling 15S rRNA 5'-end processing. Localizes to the 5' precursor of the 15S rRNA in a position that is subsequently occupied by mS47 in the mature yeast mtSSU. Uses structure and sequence-specific RNA recognition, binding to a single-stranded region of the precursor and specifically recognizing bases -6 to -1. The exchange of Ccm1 for mS47 is coupled to the irreversible removal of precursor rRNA that is accompanied by conformational changes of the mitoribosomal proteins uS5m and mS26. These conformational changes signal completion of 5'-end rRNA processing through protection of the mature 5'-end of the 15S rRNA and stabilization of mS47. The removal of the 5' precursor together with the dissociation of Ccm1 may be catalyzed by the 5'-3' exoribonuclease Pet127. Involved in the specific removal of group I introns in mitochondrial encoded transcripts. The polypeptide is Mitochondrial 15S rRNA processing factor CCM1 (CCM1) (Saccharomyces cerevisiae (strain Lalvin EC1118 / Prise de mousse) (Baker's yeast)).